The chain runs to 413 residues: Histidine--tRNA ligase (413 aa).

This sequence belongs to the class-II aminoacyl-tRNA synthetase family. Homodimer.

Its subcellular location is the cytoplasm. The catalysed reaction is tRNA(His) + L-histidine + ATP = L-histidyl-tRNA(His) + AMP + diphosphate + H(+). The polypeptide is Histidine--tRNA ligase (Geobacter metallireducens (strain ATCC 53774 / DSM 7210 / GS-15)).